The primary structure comprises 448 residues: UDP-N-acetylmuramoylalanine--D-glutamate ligase (448 aa).

116-122 is a binding site for ATP; the sequence is GSNAKST.

This sequence belongs to the MurCDEF family.

It is found in the cytoplasm. It carries out the reaction UDP-N-acetyl-alpha-D-muramoyl-L-alanine + D-glutamate + ATP = UDP-N-acetyl-alpha-D-muramoyl-L-alanyl-D-glutamate + ADP + phosphate + H(+). It functions in the pathway cell wall biogenesis; peptidoglycan biosynthesis. Its function is as follows. Cell wall formation. Catalyzes the addition of glutamate to the nucleotide precursor UDP-N-acetylmuramoyl-L-alanine (UMA). This is UDP-N-acetylmuramoylalanine--D-glutamate ligase from Pseudomonas fluorescens (strain ATCC BAA-477 / NRRL B-23932 / Pf-5).